An 808-amino-acid chain; its full sequence is Disks large-associated protein 5 (808 aa).

2 positions are modified to phosphoserine: serine 66 and serine 70. Positions 88-119 (QRKQLLQKYKEEKQLQKLKEQREKAKRGVFKV) form a coiled coil. The disordered stretch occupies residues 134-282 (QRGAKAEPEK…QTRETSEMGP (149 aa)). Composition is skewed to basic and acidic residues over residues 135-145 (RGAKAEPEKAF) and 180-193 (QTSE…ERKV). Serine 201 carries the phosphoserine modification. Basic and acidic residues-rich tracts occupy residues 232 to 241 (TNEKGSERMR) and 249 to 278 (KKPE…RETS). Serine 328 bears the Phosphoserine mark. Threonine 337 and threonine 386 each carry phosphothreonine. The disordered stretch occupies residues 377–413 (HVLNQKGASTSDSNHASVKGVPCSEGSEGQTSQPPHD). Polar residues predominate over residues 382–392 (KGASTSDSNHA). Serine 598 is subject to Phosphoserine. Phosphoserine; by AURKA is present on serine 607. Serine 612 is subject to Phosphoserine. Threonine 617 bears the Phosphothreonine mark. The residue at position 620 (serine 620) is a Phosphoserine. The segment at 629–654 (RAAGDLLRQKMPLKKPDPQSSKSEHV) is disordered. Residues 642–654 (KKPDPQSSKSEHV) are compositionally biased toward basic and acidic residues. Position 728 is a phosphothreonine (threonine 728). Positions 735–757 (SNPETNTSSQSNTSQEEAEASQS) are disordered. Position 743 is a phosphoserine (serine 743). Serine 797 carries the post-translational modification Phosphoserine; by AURKA. The residue at position 806 (serine 806) is a Phosphoserine.

Belongs to the SAPAP family. In terms of assembly, interacts with CDC2. Interacts with the C-terminal proline-rich region of FBXO7. Recruited by FBXO7 to a SCF (SKP1-CUL1-F-box) protein complex in a CDC2/Cyclin B-phosphorylation dependent manner. Interacts with CDH1. Post-translationally, ubiquitinated, leading to its degradation. In terms of processing, decreased phosphorylation levels are associated with the differentiation of intestinal epithelial cells. As to expression, expressed at low levels in normal resting liver. Up-regulated in regenerating liver after partial hepatectomy.

It localises to the nucleus. It is found in the cytoplasm. The protein resides in the cytoskeleton. Its subcellular location is the spindle. In terms of biological role, potential cell cycle regulator that may play a role in carcinogenesis of cancer cells. Mitotic phosphoprotein regulated by the ubiquitin-proteasome pathway. Key regulator of adherens junction integrity and differentiation that may be involved in CDH1-mediated adhesion and signaling in epithelial cells. In Mus musculus (Mouse), this protein is Disks large-associated protein 5 (Dlgap5).